The sequence spans 389 residues: MTNQTQLSSKTYDTHFAKLTAEQLAENAKKKVIIGMSGGVDSSVSAFILQQQGYQVEGLFMKNWEEDDDTDYCTAAADLADAQAVADKLGMKLHKINFAAEYWDNVFEHFLNEYKAGRTPNPDILCNKEIKFKAFLEYAAEDLGADYIATGHYVRRSGDDNNAQLLRGLDANKDQSYFLYTLSHKQVGQSLFPVGDIEKPIVRQIAEDLGLATAKKKDSTGICFIGERKFKDFLARYLPAQPGEIRTVDGKVVGRHDGLMYHTLGQRKGLGIGGVKGLSEDPFYVVEKDLINNVLVVAQGHDNSALLSSGLIATQLHWVDRQPIRENLRCTVKTRYRQTDIACEIQPIDDDTIRVIFDEPQIAVTPGQSAVFYQGDVCLGGGVIEEQLK.

ATP contacts are provided by residues 35–42 (GMSGGVDS) and M61. The segment at 121–123 (NPD) is interaction with target base in tRNA. The active-site Nucleophile is the C126. C126 and C223 are joined by a disulfide. An ATP-binding site is contributed by G151. The interaction with tRNA stretch occupies residues 173 to 175 (KDQ). C223 (cysteine persulfide intermediate) is an active-site residue. An interaction with tRNA region spans residues 335–336 (RY).

It belongs to the MnmA/TRMU family.

The protein localises to the cytoplasm. The catalysed reaction is S-sulfanyl-L-cysteinyl-[protein] + uridine(34) in tRNA + AH2 + ATP = 2-thiouridine(34) in tRNA + L-cysteinyl-[protein] + A + AMP + diphosphate + H(+). Functionally, catalyzes the 2-thiolation of uridine at the wobble position (U34) of tRNA, leading to the formation of s(2)U34. The protein is tRNA-specific 2-thiouridylase MnmA of Actinobacillus pleuropneumoniae serotype 3 (strain JL03).